Here is a 96-residue protein sequence, read N- to C-terminus: Aspartyl/glutamyl-tRNA(Asn/Gln) amidotransferase subunit C (96 aa).

The protein belongs to the GatC family. Heterotrimer of A, B and C subunits.

It carries out the reaction L-glutamyl-tRNA(Gln) + L-glutamine + ATP + H2O = L-glutaminyl-tRNA(Gln) + L-glutamate + ADP + phosphate + H(+). It catalyses the reaction L-aspartyl-tRNA(Asn) + L-glutamine + ATP + H2O = L-asparaginyl-tRNA(Asn) + L-glutamate + ADP + phosphate + 2 H(+). In terms of biological role, allows the formation of correctly charged Asn-tRNA(Asn) or Gln-tRNA(Gln) through the transamidation of misacylated Asp-tRNA(Asn) or Glu-tRNA(Gln) in organisms which lack either or both of asparaginyl-tRNA or glutaminyl-tRNA synthetases. The reaction takes place in the presence of glutamine and ATP through an activated phospho-Asp-tRNA(Asn) or phospho-Glu-tRNA(Gln). This Leptospira interrogans serogroup Icterohaemorrhagiae serovar copenhageni (strain Fiocruz L1-130) protein is Aspartyl/glutamyl-tRNA(Asn/Gln) amidotransferase subunit C.